The sequence spans 352 residues: Anthranilate phosphoribosyltransferase (352 aa).

Residues Gly-96, 99–100 (GS), Ser-104, 106–109 (NIST), 124–132 (KHGNRSVSS), and Ser-136 contribute to the 5-phospho-alpha-D-ribose 1-diphosphate site. Gly-96 is a binding site for anthranilate. Ser-108 provides a ligand contact to Mg(2+). An anthranilate-binding site is contributed by Asn-127. Arg-182 contributes to the anthranilate binding site. Asp-241 and Glu-242 together coordinate Mg(2+).

The protein belongs to the anthranilate phosphoribosyltransferase family. Homodimer. Mg(2+) serves as cofactor.

It carries out the reaction N-(5-phospho-beta-D-ribosyl)anthranilate + diphosphate = 5-phospho-alpha-D-ribose 1-diphosphate + anthranilate. The protein operates within amino-acid biosynthesis; L-tryptophan biosynthesis; L-tryptophan from chorismate: step 2/5. In terms of biological role, catalyzes the transfer of the phosphoribosyl group of 5-phosphorylribose-1-pyrophosphate (PRPP) to anthranilate to yield N-(5'-phosphoribosyl)-anthranilate (PRA). This chain is Anthranilate phosphoribosyltransferase, found in Syntrophotalea carbinolica (strain DSM 2380 / NBRC 103641 / GraBd1) (Pelobacter carbinolicus).